The chain runs to 345 residues: Heat-inducible transcription repressor HrcA (345 aa).

The protein belongs to the HrcA family.

Functionally, negative regulator of class I heat shock genes (grpE-dnaK-dnaJ and groELS operons). Prevents heat-shock induction of these operons. The protein is Heat-inducible transcription repressor HrcA of Listeria monocytogenes serotype 1/2a (strain 10403S).